A 236-amino-acid chain; its full sequence is 2-C-methyl-D-erythritol 4-phosphate cytidylyltransferase (236 aa).

It belongs to the IspD/TarI cytidylyltransferase family. IspD subfamily. In terms of assembly, homodimer.

The catalysed reaction is 2-C-methyl-D-erythritol 4-phosphate + CTP + H(+) = 4-CDP-2-C-methyl-D-erythritol + diphosphate. It participates in isoprenoid biosynthesis; isopentenyl diphosphate biosynthesis via DXP pathway; isopentenyl diphosphate from 1-deoxy-D-xylulose 5-phosphate: step 2/6. In terms of biological role, catalyzes the formation of 4-diphosphocytidyl-2-C-methyl-D-erythritol from CTP and 2-C-methyl-D-erythritol 4-phosphate (MEP). This is 2-C-methyl-D-erythritol 4-phosphate cytidylyltransferase from Escherichia fergusonii (strain ATCC 35469 / DSM 13698 / CCUG 18766 / IAM 14443 / JCM 21226 / LMG 7866 / NBRC 102419 / NCTC 12128 / CDC 0568-73).